Here is a 185-residue protein sequence, read N- to C-terminus: Regulatory protein RecX (185 aa).

It belongs to the RecX family.

Its subcellular location is the cytoplasm. In terms of biological role, modulates RecA activity. The chain is Regulatory protein RecX from Thermobifida fusca (strain YX).